The primary structure comprises 178 residues: SsrA-binding protein (178 aa).

The segment at 1–28 (MAKKSTPVDSGRSKGKKASAPRGGGPAV) is disordered.

The protein belongs to the SmpB family.

Its subcellular location is the cytoplasm. In terms of biological role, required for rescue of stalled ribosomes mediated by trans-translation. Binds to transfer-messenger RNA (tmRNA), required for stable association of tmRNA with ribosomes. tmRNA and SmpB together mimic tRNA shape, replacing the anticodon stem-loop with SmpB. tmRNA is encoded by the ssrA gene; the 2 termini fold to resemble tRNA(Ala) and it encodes a 'tag peptide', a short internal open reading frame. During trans-translation Ala-aminoacylated tmRNA acts like a tRNA, entering the A-site of stalled ribosomes, displacing the stalled mRNA. The ribosome then switches to translate the ORF on the tmRNA; the nascent peptide is terminated with the 'tag peptide' encoded by the tmRNA and targeted for degradation. The ribosome is freed to recommence translation, which seems to be the essential function of trans-translation. The polypeptide is SsrA-binding protein (Corynebacterium urealyticum (strain ATCC 43042 / DSM 7109)).